A 395-amino-acid chain; its full sequence is Acid ceramidase (395 aa).

The signal sequence occupies residues 1-21; it reads MLGRSRLALVLLAAAVSCAVA. The cysteines at positions 31 and 340 are disulfide-linked. Cys-143 acts as the Nucleophile in catalysis. N-linked (GlcNAc...) asparagine glycans are attached at residues Asn-173, Asn-195, Asn-259, Asn-286, Asn-342, and Asn-348. A disulfide bond links Cys-388 and Cys-392.

The protein belongs to the acid ceramidase family. In terms of assembly, heterodimer; disulfide-linked. The heterodimer is composed of the disulfide-linked alpha and beta chains produced by autocatalytic cleavage of the precursor. Post-translationally, N-glycosylated. In terms of processing, proteolytically cleaved into two chains alpha and beta that remain associated via a disulfide bond. Cleavage gives rise to a conformation change that activates the enzyme. The same catalytic Cys residue mediates the autoproteolytic cleavage and subsequent hydrolysis of lipid substrates. The beta chain may undergo an additional C-terminal processing.

Its subcellular location is the lysosome. It is found in the secreted. It carries out the reaction an N-acylsphing-4-enine + H2O = sphing-4-enine + a fatty acid. The enzyme catalyses N-dodecanoylsphing-4-enine + H2O = dodecanoate + sphing-4-enine. The catalysed reaction is N-tetradecanoylsphing-4-enine + H2O = tetradecanoate + sphing-4-enine. It catalyses the reaction N-hexadecanoylsphing-4-enine + H2O = sphing-4-enine + hexadecanoate. It carries out the reaction N-octadecanoylsphing-4-enine + H2O = sphing-4-enine + octadecanoate. The enzyme catalyses N-dodecanoyl-(4R)-hydroxysphinganine + H2O = (4R)-hydroxysphinganine + dodecanoate. The catalysed reaction is N-(dodecanoyl)-sphinganine + H2O = dodecanoate + sphinganine. It catalyses the reaction N-(acetyl)-sphing-4-enine + H2O = sphing-4-enine + acetate. It carries out the reaction N-(hexanoyl)sphing-4-enine + H2O = hexanoate + sphing-4-enine. The enzyme catalyses N-octanoylsphing-4-enine + H2O = octanoate + sphing-4-enine. The catalysed reaction is N-(9Z-octadecenoyl)-sphing-4-enine + H2O = sphing-4-enine + (9Z)-octadecenoate. It catalyses the reaction N-dodecanoylethanolamine + H2O = dodecanoate + ethanolamine. It participates in lipid metabolism; sphingolipid metabolism. Lysosomal ceramidase that hydrolyzes sphingolipid ceramides into sphingosine and free fatty acids at acidic pH. Ceramides, sphingosine, and its phosphorylated form sphingosine-1-phosphate are bioactive lipids that mediate cellular signaling pathways regulating several biological processes including cell proliferation, apoptosis and differentiation. Has a higher catalytic efficiency towards C12-ceramides versus other ceramides. Also catalyzes the reverse reaction allowing the synthesis of ceramides from fatty acids and sphingosine. For the reverse synthetic reaction, the natural sphingosine D-erythro isomer is more efficiently utilized as a substrate compared to D-erythro-dihydrosphingosine and D-erythro-phytosphingosine, while the fatty acids with chain lengths of 12 or 14 carbons are the most efficiently used. Also has an N-acylethanolamine hydrolase activity. By regulating the levels of ceramides, sphingosine and sphingosine-1-phosphate in the epidermis, mediates the calcium-induced differentiation of epidermal keratinocytes. Also indirectly regulates tumor necrosis factor/TNF-induced apoptosis. By regulating the intracellular balance between ceramides and sphingosine, in adrenocortical cells, probably also acts as a regulator of steroidogenesis. The sequence is that of Acid ceramidase from Macaca fascicularis (Crab-eating macaque).